The sequence spans 650 residues: Chaperone protein HtpG (650 aa).

Residues 1 to 349 (MTKTTKKFET…SSDLPLNVSR (349 aa)) form an a; substrate-binding region. The segment at 350–566 (EILQEDVQIK…EHGLNANMER (217 aa)) is b. The tract at residues 567-650 (ILRAMNQDVP…VADGKAAAGE (84 aa)) is c.

It belongs to the heat shock protein 90 family. Homodimer.

It is found in the cytoplasm. Molecular chaperone. Has ATPase activity. This chain is Chaperone protein HtpG, found in Geobacter metallireducens (strain ATCC 53774 / DSM 7210 / GS-15).